The sequence spans 321 residues: Malate dehydrogenase (321 aa).

NAD(+)-binding positions include G10–G15 and D34. R83 and R89 together coordinate substrate. NAD(+) is bound by residues N96 and I119–N121. Residues N121 and R152 each coordinate substrate. The active-site Proton acceptor is H176.

Belongs to the LDH/MDH superfamily. MDH type 3 family.

The enzyme catalyses (S)-malate + NAD(+) = oxaloacetate + NADH + H(+). In terms of biological role, catalyzes the reversible oxidation of malate to oxaloacetate. The sequence is that of Malate dehydrogenase from Sinorhizobium fredii (strain NBRC 101917 / NGR234).